The chain runs to 262 residues: Small ribosomal subunit protein uS2 (262 aa).

Belongs to the universal ribosomal protein uS2 family.

This chain is Small ribosomal subunit protein uS2, found in Borreliella afzelii (strain PKo) (Borrelia afzelii).